The primary structure comprises 161 residues: Transcription antitermination protein NusB (161 aa).

It belongs to the NusB family.

Its function is as follows. Involved in transcription antitermination. Required for transcription of ribosomal RNA (rRNA) genes. Binds specifically to the boxA antiterminator sequence of the ribosomal RNA (rrn) operons. This chain is Transcription antitermination protein NusB, found in Nitrobacter winogradskyi (strain ATCC 25391 / DSM 10237 / CIP 104748 / NCIMB 11846 / Nb-255).